The chain runs to 334 residues: Ketol-acid reductoisomerase (NADP(+)) (334 aa).

Residues 1–181 form the KARI N-terminal Rossmann domain; that stretch reads MNRYYDKNAD…GGGRTGILET (181 aa). NADP(+)-binding positions include 24-27, Arg-47, Ser-50, Ser-52, and 82-85; these read YGSQ and DEFQ. His-107 is a catalytic residue. Gly-133 is an NADP(+) binding site. The KARI C-terminal knotted domain occupies 182-323; it reads SFKDETETDL…ESLRSMMPWI (142 aa). Residues Asp-190, Glu-194, Glu-226, and Glu-230 each contribute to the Mg(2+) site. Ser-251 contacts substrate.

Belongs to the ketol-acid reductoisomerase family. Mg(2+) is required as a cofactor.

The catalysed reaction is (2R)-2,3-dihydroxy-3-methylbutanoate + NADP(+) = (2S)-2-acetolactate + NADPH + H(+). It catalyses the reaction (2R,3R)-2,3-dihydroxy-3-methylpentanoate + NADP(+) = (S)-2-ethyl-2-hydroxy-3-oxobutanoate + NADPH + H(+). The protein operates within amino-acid biosynthesis; L-isoleucine biosynthesis; L-isoleucine from 2-oxobutanoate: step 2/4. It participates in amino-acid biosynthesis; L-valine biosynthesis; L-valine from pyruvate: step 2/4. Involved in the biosynthesis of branched-chain amino acids (BCAA). Catalyzes an alkyl-migration followed by a ketol-acid reduction of (S)-2-acetolactate (S2AL) to yield (R)-2,3-dihydroxy-isovalerate. In the isomerase reaction, S2AL is rearranged via a Mg-dependent methyl migration to produce 3-hydroxy-3-methyl-2-ketobutyrate (HMKB). In the reductase reaction, this 2-ketoacid undergoes a metal-dependent reduction by NADPH to yield (R)-2,3-dihydroxy-isovalerate. In Ruthia magnifica subsp. Calyptogena magnifica, this protein is Ketol-acid reductoisomerase (NADP(+)).